We begin with the raw amino-acid sequence, 312 residues long: Ribosomal RNA small subunit methyltransferase H (312 aa).

Residues 33-35, Asp-52, Phe-79, Asp-100, and Gln-107 each bind S-adenosyl-L-methionine; that span reads AGH.

The protein belongs to the methyltransferase superfamily. RsmH family.

The protein localises to the cytoplasm. The enzyme catalyses cytidine(1402) in 16S rRNA + S-adenosyl-L-methionine = N(4)-methylcytidine(1402) in 16S rRNA + S-adenosyl-L-homocysteine + H(+). Its function is as follows. Specifically methylates the N4 position of cytidine in position 1402 (C1402) of 16S rRNA. The chain is Ribosomal RNA small subunit methyltransferase H from Finegoldia magna (strain ATCC 29328 / DSM 20472 / WAL 2508) (Peptostreptococcus magnus).